The sequence spans 466 residues: Soluble pyridine nucleotide transhydrogenase (466 aa).

Glu-36–Cys-45 serves as a coordination point for FAD.

This sequence belongs to the class-I pyridine nucleotide-disulfide oxidoreductase family. It depends on FAD as a cofactor.

Its subcellular location is the cytoplasm. The catalysed reaction is NAD(+) + NADPH = NADH + NADP(+). Functionally, conversion of NADPH, generated by peripheral catabolic pathways, to NADH, which can enter the respiratory chain for energy generation. The protein is Soluble pyridine nucleotide transhydrogenase of Vibrio parahaemolyticus serotype O3:K6 (strain RIMD 2210633).